The following is a 101-amino-acid chain: Small ribosomal subunit protein uS14 (101 aa).

This sequence belongs to the universal ribosomal protein uS14 family. As to quaternary structure, part of the 30S ribosomal subunit. Contacts proteins S3 and S10.

Binds 16S rRNA, required for the assembly of 30S particles and may also be responsible for determining the conformation of the 16S rRNA at the A site. This Polynucleobacter asymbioticus (strain DSM 18221 / CIP 109841 / QLW-P1DMWA-1) (Polynucleobacter necessarius subsp. asymbioticus) protein is Small ribosomal subunit protein uS14.